The sequence spans 420 residues: Acetyl-CoA acetyltransferase, mitochondrial (420 aa).

Residues 1–26 (MTSRALYSTRSQLCRHLAHKYLSRSY) constitute a mitochondrion transit peptide. Cys119 functions as the Acyl-thioester intermediate in the catalytic mechanism. CoA is bound by residues Tyr212, 251 to 253 (KVD), and Lys256. Tyr212 contributes to the K(+) binding site. Residues Ala273, Ala274, and Ala276 each coordinate K(+). Ser277 provides a ligand contact to CoA. Val374 serves as a coordination point for K(+). Cys406 acts as the Proton donor/acceptor in catalysis.

This sequence belongs to the thiolase-like superfamily. Thiolase family. In terms of assembly, homotetramer.

It is found in the mitochondrion. It catalyses the reaction 2 acetyl-CoA = acetoacetyl-CoA + CoA. The enzyme catalyses propanoyl-CoA + acetyl-CoA = 2-methyl-3-oxobutanoyl-CoA + CoA. It participates in lipid metabolism; fatty acid beta-oxidation. Functionally, this is one of the enzymes that catalyzes the last step of the mitochondrial beta-oxidation pathway, an aerobic process breaking down fatty acids into acetyl-CoA. Using free coenzyme A/CoA, catalyzes the thiolytic cleavage of medium- to long-chain 3-oxoacyl-CoAs into acetyl-CoA and a fatty acyl-CoA shortened by two carbon atoms. The activity of the enzyme is reversible and it can also catalyze the condensation of two acetyl-CoA molecules into acetoacetyl-CoA. Thereby, it plays a major role in ketone body metabolism. This chain is Acetyl-CoA acetyltransferase, mitochondrial (acat1), found in Danio rerio (Zebrafish).